The following is a 575-amino-acid chain: uncharacterized protein (575 aa).

It localises to the cytoplasm. The protein localises to the cytoskeleton. The protein resides in the microtubule organizing center. It is found in the spindle pole body. This is an uncharacterized protein from Schizosaccharomyces pombe (strain 972 / ATCC 24843) (Fission yeast).